Consider the following 538-residue polypeptide: Lipid scramblase CLPTM1L (538 aa).

Over 1-10 (MWSGRSSFTS) the chain is Cytoplasmic. A helical transmembrane segment spans residues 11-31 (LVVGVFVVYVVHTCWVMYGIV). Residues 32-284 (YTRPCSGDAN…VKGIFVDTNL (253 aa)) are Extracellular-facing. 3 N-linked (GlcNAc...) asparagine glycosylation sites follow: asparagine 91, asparagine 101, and asparagine 229. Residues 285 to 305 (YFLALTFFVAAFHLLFDFLAF) traverse the membrane as a helical segment. Residues 306 to 324 (KNDISFWKKKKSMIGMSTK) are Cytoplasmic-facing. The chain crosses the membrane as a helical span at residues 325-342 (AVLWRCFSTVVIFLFLLD). The Extracellular segment spans residues 343–346 (EQTS). Residues 347-364 (LLVLVPAGVGAAIELWKV) form a helical membrane-spanning segment. The Cytoplasmic portion of the chain corresponds to 365–402 (KKALKMTIFWRGLMPEFQFGTYSESERKTEEYDTQAMK). A helical membrane pass occupies residues 403–423 (YLSYLLYPLCVGGAVYSLLNI). Residues 424-428 (KYKSW) are Extracellular-facing. A helical transmembrane segment spans residues 429–449 (YSWLINSFVNGVYAFGFLFML). The Cytoplasmic portion of the chain corresponds to 450–538 (PQLFVNYKLK…EKATRAPHTD (89 aa)).

It belongs to the CLPTM1 family. As to expression, ubiquitously expressed.

The protein localises to the endoplasmic reticulum membrane. It catalyses the reaction a 6-(alpha-D-glucosaminyl)-1-(1,2-diacyl-sn-glycero-3-phospho)-1D-myo-inositol(in) = a 6-(alpha-D-glucosaminyl)-1-(1,2-diacyl-sn-glycero-3-phospho)-1D-myo-inositol(out). The catalysed reaction is 6-(alpha-D-glucosaminyl)-(1-octadecanoyl,2-(9Z)-octadecenoyl-sn-glycero-3-phospho)-1D-myo-inositol(in) = 6-(alpha-D-glucosaminyl)-(1-octadecanoyl,2-(9Z)-octadecenoyl-sn-glycero-3-phospho)-1D-myo-inositol(out). It carries out the reaction a 1,2-diacyl-sn-glycero-3-phospho-(1D-myo-inositol)(in) = a 1,2-diacyl-sn-glycero-3-phospho-(1D-myo-inositol)(out). The enzyme catalyses a 1,2-diacyl-sn-glycero-3-phosphocholine(in) = a 1,2-diacyl-sn-glycero-3-phosphocholine(out). It catalyses the reaction a 1,2-diacyl-sn-glycero-3-phosphoethanolamine(in) = a 1,2-diacyl-sn-glycero-3-phosphoethanolamine(out). Its function is as follows. Scramblase that mediates the translocation of glucosaminylphosphatidylinositol (alpha-D-GlcN-(1-6)-(1,2-diacyl-sn-glycero-3-phospho)-1D-myo-inositol, GlcN-PI) across the endoplasmic reticulum (ER) membrane, from the cytosolic leaflet to the luminal leaflet of the ER membrane, where it participates in the biosynthesis of glycosylphosphatidylinositol (GPI). GPI is a lipid glycoconjugate involved in post-translational modification of proteins. Can also translocate 1,2-diacyl-sn-glycero-3-phospho-(1D-myo-inositol) (phosphatidylinositol or PI), as well as several other phospholipids (1,2-diacyl-sn-glycero-3-phosphocholine, 1,2-diacyl-sn-glycero-3-phosphoethanolamine), and N-acetylglucosaminylphosphatidylinositol (GlcNAc-PI) in vitro. The polypeptide is Lipid scramblase CLPTM1L (CLPTM1L) (Homo sapiens (Human)).